The sequence spans 359 residues: Salicylate carboxymethyltransferase (359 aa).

S-adenosyl-L-methionine is bound at residue Tyr18. Residues Tyr18, 21-25 (NSFIQ), and Gln25 each bind substrate. Residues Gly59, 59 to 60 (GC), 59 to 61 (GCS), Asn65, 96 to 99 (LNDL), Asp98, 129 to 131 (SFY), and 146 to 148 (SYS) each bind S-adenosyl-L-methionine. Residues 147–151 (YSLMW) and Trp151 contribute to the substrate site. Residues Asn162, Asp248, Phe250, and Asn251 each contribute to the Mg(2+) site. Tyr255 contacts substrate.

Belongs to the methyltransferase superfamily. SABATH family.

The catalysed reaction is salicylate + S-adenosyl-L-methionine = methyl salicylate + S-adenosyl-L-homocysteine. Functionally, catalyzes the methylation of the free carboxyl end of the plant hormone salicylic acid (SA). Converts SA to SA methyl ester (MSA). The volatile compound MSA is hypothesized to act as an airborne signal that triggers defense responses in uninfected plants. MSA is an important chemoattractant for moth pollinated flowering plants. The chain is Salicylate carboxymethyltransferase (SAMT) from Clarkia breweri (Fairy fans).